The primary structure comprises 214 residues: Glycoprotein Q2 (214 aa).

The first 19 residues, 1–19 (MHFLVVYILIHFHAYRGMA), serve as a signal peptide directing secretion. N-linked (GlcNAc...) asparagine; by host glycosylation is found at Asn41, Asn74, Asn110, and Asn210.

In terms of assembly, interacts with isoform gQ1. The heterodimer gQ1-gQ2 associates with the glycoprotein complex gH-gL to form a tetrameric complex. The gH/gL/gQ1/gQ2 complex binds to human receptor CD46. Glycosylated by host.

It localises to the virion membrane. The protein localises to the host endoplasmic reticulum-Golgi intermediate compartment. Functionally, plays a role in virus entry by participating in host receptor binding at the cell surface. This is Glycoprotein Q2 from Human herpesvirus 6A (strain Uganda-1102) (HHV-6 variant A).